The primary structure comprises 624 residues: Poly(A)-specific ribonuclease PARN (624 aa).

Asp28 and Glu30 together coordinate a divalent metal cation. Residues 171 to 238 enclose the R3H domain; it reads KKFIDQVIEK…ERHIVISKVD (68 aa). The residue at position 213 (Lys213) is an N6-acetyllysine. A divalent metal cation is bound by residues Asp285 and Asp375. At Lys492 the chain carries N6-acetyllysine. Ser523 is modified (phosphoserine). At Ser543 the chain carries Phosphoserine; by MAPKAPK2. Positions 551–612 are disordered; sequence GKRTLSPDPR…ELSLAGSVSD (62 aa). Over residues 567–579 the composition is skewed to acidic residues; sequence RESEEVSDSELEQ. 3 positions are modified to phosphoserine: Ser569, Ser573, and Ser575. Residues 592-601 show a composition bias toward basic residues; it reads KKSKKLKRMK. Phosphoserine is present on residues Ser605, Ser609, and Ser613.

Belongs to the CAF1 family. Homodimer. Found in a mRNA decay complex with RENT1, RENT2 and RENT3B. Interacts with KHSRP. Interacts with CELF1/CUGBP1. Interacts with ZC3HAV1 in an RNA-independent manner. Interacts with DHX36. Mg(2+) serves as cofactor. In terms of processing, phosphorylation by MAPKAPK2, preventing GADD45A mRNA degradation after genotoxic stress.

Its subcellular location is the nucleus. It localises to the cytoplasm. The protein resides in the nucleolus. It catalyses the reaction Exonucleolytic cleavage of poly(A) to 5'-AMP.. 3'-exoribonuclease that has a preference for poly(A) tails of mRNAs, thereby efficiently degrading poly(A) tails. Exonucleolytic degradation of the poly(A) tail is often the first step in the decay of eukaryotic mRNAs and is also used to silence certain maternal mRNAs translationally during oocyte maturation and early embryonic development. Interacts with both the 3'-end poly(A) tail and the 5'-end cap structure during degradation, the interaction with the cap structure being required for an efficient degradation of poly(A) tails. Involved in nonsense-mediated mRNA decay, a critical process of selective degradation of mRNAs that contain premature stop codons. Also involved in degradation of inherently unstable mRNAs that contain AU-rich elements (AREs) in their 3'-UTR, possibly via its interaction with KHSRP. Probably mediates the removal of poly(A) tails of AREs mRNAs, which constitutes the first step of destabilization. Also able to recognize poly(A) tails of microRNAs such as MIR21 and H/ACA box snoRNAs (small nucleolar RNAs) leading to leading to microRNAs degradation or snoRNA increased stability. The sequence is that of Poly(A)-specific ribonuclease PARN (Parn) from Mus musculus (Mouse).